The chain runs to 329 residues: D-alanine--D-alanine ligase (329 aa).

An ATP-grasp domain is found at 121–327 (KLWYDALDIP…FSEFLAQCVT (207 aa)). Residue 151-206 (AFGHWGSIFVKAARQGSSVGCYKVTTEDQIAPAIEAAFGFSEQVLVEQAVKPRELE) coordinates ATP. Positions 281, 294, and 296 each coordinate Mg(2+).

This sequence belongs to the D-alanine--D-alanine ligase family. Mg(2+) serves as cofactor. Mn(2+) is required as a cofactor.

It localises to the cytoplasm. It catalyses the reaction 2 D-alanine + ATP = D-alanyl-D-alanine + ADP + phosphate + H(+). It functions in the pathway cell wall biogenesis; peptidoglycan biosynthesis. Cell wall formation. In Vibrio cholerae serotype O1 (strain ATCC 39541 / Classical Ogawa 395 / O395), this protein is D-alanine--D-alanine ligase.